We begin with the raw amino-acid sequence, 600 residues long: Aspartate--tRNA(Asp/Asn) ligase (600 aa).

Glu175 serves as a coordination point for L-aspartate. The tract at residues 199–202 (QLFK) is aspartate. Arg221 is a binding site for L-aspartate. Residues 221 to 223 (RDE) and Gln230 contribute to the ATP site. His453 contacts L-aspartate. Glu487 is a binding site for ATP. Arg494 provides a ligand contact to L-aspartate. Residue 539 to 542 (GWDR) coordinates ATP. A disordered region spans residues 578-600 (AAQRKESGIDFKPKKGPQGQKEK). Residues 580–590 (QRKESGIDFKP) are compositionally biased toward basic and acidic residues.

It belongs to the class-II aminoacyl-tRNA synthetase family. Type 1 subfamily. Homodimer.

It localises to the cytoplasm. The catalysed reaction is tRNA(Asx) + L-aspartate + ATP = L-aspartyl-tRNA(Asx) + AMP + diphosphate. Its function is as follows. Aspartyl-tRNA synthetase with relaxed tRNA specificity since it is able to aspartylate not only its cognate tRNA(Asp) but also tRNA(Asn). Reaction proceeds in two steps: L-aspartate is first activated by ATP to form Asp-AMP and then transferred to the acceptor end of tRNA(Asp/Asn). This is Aspartate--tRNA(Asp/Asn) ligase from Corynebacterium jeikeium (strain K411).